The sequence spans 329 residues: GTP 3',8-cyclase (329 aa).

The Radical SAM core domain occupies Ala8 to Ala234. Arg17 provides a ligand contact to GTP. 2 residues coordinate [4Fe-4S] cluster: Cys24 and Cys28. Tyr30 is a binding site for S-adenosyl-L-methionine. Cys31 is a binding site for [4Fe-4S] cluster. Residue Arg68 participates in GTP binding. Gly72 lines the S-adenosyl-L-methionine pocket. Position 99 (Thr99) interacts with GTP. Ser123 contributes to the S-adenosyl-L-methionine binding site. GTP is bound at residue Lys160. Met194 contacts S-adenosyl-L-methionine. 2 residues coordinate [4Fe-4S] cluster: Cys257 and Cys260. Arg262 to Arg264 serves as a coordination point for GTP. Residue Cys274 participates in [4Fe-4S] cluster binding.

It belongs to the radical SAM superfamily. MoaA family. In terms of assembly, monomer and homodimer. The cofactor is [4Fe-4S] cluster.

The enzyme catalyses GTP + AH2 + S-adenosyl-L-methionine = (8S)-3',8-cyclo-7,8-dihydroguanosine 5'-triphosphate + 5'-deoxyadenosine + L-methionine + A + H(+). Its pathway is cofactor biosynthesis; molybdopterin biosynthesis. Catalyzes the cyclization of GTP to (8S)-3',8-cyclo-7,8-dihydroguanosine 5'-triphosphate. The protein is GTP 3',8-cyclase of Shigella sonnei (strain Ss046).